The sequence spans 269 residues: GTP cyclohydrolase FolE2 2 (269 aa).

The protein belongs to the GTP cyclohydrolase IV family.

The enzyme catalyses GTP + H2O = 7,8-dihydroneopterin 3'-triphosphate + formate + H(+). It functions in the pathway cofactor biosynthesis; 7,8-dihydroneopterin triphosphate biosynthesis; 7,8-dihydroneopterin triphosphate from GTP: step 1/1. In terms of biological role, converts GTP to 7,8-dihydroneopterin triphosphate. The polypeptide is GTP cyclohydrolase FolE2 2 (Burkholderia lata (strain ATCC 17760 / DSM 23089 / LMG 22485 / NCIMB 9086 / R18194 / 383)).